Here is a 316-residue protein sequence, read N- to C-terminus: Glutathione synthetase (316 aa).

Residues 125 to 310 enclose the ATP-grasp domain; that stretch reads KLFTAWFSDL…ITGMLMDAIE (186 aa). N-beta-linked (GlcNAc) arginine glycosylation occurs at arginine 256. 2 residues coordinate Mg(2+): glutamate 281 and asparagine 283.

This sequence belongs to the prokaryotic GSH synthase family. Requires Mg(2+) as cofactor. Mn(2+) serves as cofactor.

The enzyme catalyses gamma-L-glutamyl-L-cysteine + glycine + ATP = glutathione + ADP + phosphate + H(+). The protein operates within sulfur metabolism; glutathione biosynthesis; glutathione from L-cysteine and L-glutamate: step 2/2. The chain is Glutathione synthetase from Escherichia coli O127:H6 (strain E2348/69 / EPEC).